Here is a 300-residue protein sequence, read N- to C-terminus: Hairy/enhancer-of-split related with YRPW motif protein 1 (300 aa).

The segment at 1 to 52 (MKRGHDYSSSDSELDENIEVEKESADENGNLSSAAGSMSPSTSSQILARKRR) is disordered. Residues 32–44 (SSAAGSMSPSTSS) are compositionally biased toward low complexity. The bHLH domain occupies 48–103 (ARKRRRGIIEKRRRDRINNSLSELRRLVPSAFEKQGSAKLEKAEILQMTVDHLKML). The Orange domain maps to 121 to 157 (YRSLGFRECLAEVARYLSIIEGMDTTDPLRVRLVSHL). Residues 199 to 210 (AHTSANSTSSST) show a composition bias toward low complexity. Disordered stretches follow at residues 199–232 (AHTS…LRVP) and 278–300 (LSPT…IGAF). Residues 290 to 293 (YRPW) carry the YRPW motif motif.

This sequence belongs to the HEY family. Efficient DNA binding requires dimerization with another bHLH protein. Binds DNA in the form of homodimer or more strongly as a heterodimer with hes1/hairy1 or hes4/hairy2b. Also weakly interacts with the bHLH proteins hes2, neurod1 and neurod4/ath3. Interacts (via Orange domain) with ccdc89/boip (via C-terminus).

Its subcellular location is the nucleus. Downstream effector of Notch signaling. Transcriptional repressor which binds preferentially to the canonical E box sequence 5'-CACGTG-3'. Acts as a suppressor of neurogenesis by antagonizing proneural gene function. Functions during floorplate development. Plays a role in pronephros formation in the inhibition of distal tubule and duct cell fates and the promotion of glomus and proximal tubule formation. The sequence is that of Hairy/enhancer-of-split related with YRPW motif protein 1 (hey1) from Xenopus tropicalis (Western clawed frog).